Reading from the N-terminus, the 286-residue chain is 4-diphosphocytidyl-2-C-methyl-D-erythritol kinase (286 aa).

Lys11 is an active-site residue. Residue 94-104 (PMGGGIGGGSS) participates in ATP binding. Asp136 is an active-site residue.

It belongs to the GHMP kinase family. IspE subfamily.

The catalysed reaction is 4-CDP-2-C-methyl-D-erythritol + ATP = 4-CDP-2-C-methyl-D-erythritol 2-phosphate + ADP + H(+). The protein operates within isoprenoid biosynthesis; isopentenyl diphosphate biosynthesis via DXP pathway; isopentenyl diphosphate from 1-deoxy-D-xylulose 5-phosphate: step 3/6. Functionally, catalyzes the phosphorylation of the position 2 hydroxy group of 4-diphosphocytidyl-2C-methyl-D-erythritol. This chain is 4-diphosphocytidyl-2-C-methyl-D-erythritol kinase, found in Pseudomonas putida (strain ATCC 47054 / DSM 6125 / CFBP 8728 / NCIMB 11950 / KT2440).